Reading from the N-terminus, the 949-residue chain is RNA polymerase-associated protein RapA (949 aa).

In terms of domain architecture, Helicase ATP-binding spans 164–332 (EVADRIAPRV…FARLRLLDPN (169 aa)). Residue 177–184 (DEVGLGKT) participates in ATP binding. Positions 278–281 (DEAH) match the DEAH box motif. In terms of domain architecture, Helicase C-terminal spans 474–628 (RVEWLIDQLK…TCPTGNALQH (155 aa)).

Belongs to the SNF2/RAD54 helicase family. RapA subfamily. As to quaternary structure, interacts with the RNAP. Has a higher affinity for the core RNAP than for the holoenzyme. Its ATPase activity is stimulated by binding to RNAP.

Its function is as follows. Transcription regulator that activates transcription by stimulating RNA polymerase (RNAP) recycling in case of stress conditions such as supercoiled DNA or high salt concentrations. Probably acts by releasing the RNAP, when it is trapped or immobilized on tightly supercoiled DNA. Does not activate transcription on linear DNA. Probably not involved in DNA repair. The sequence is that of RNA polymerase-associated protein RapA from Pseudomonas fluorescens (strain ATCC BAA-477 / NRRL B-23932 / Pf-5).